A 237-amino-acid polypeptide reads, in one-letter code: Protein ULTRAPETALA 1 (237 aa).

One can recognise an SAND domain in the interval E18–N116. The segment at V133–S191 adopts a CW-type zinc-finger fold.

As to quaternary structure, interacts with HHO5. Associates with ATX1 for trimethylating 'Lys-4' on histone H3 (H3K4me3) at flower MADS box gene loci. As to expression, expressed at low levels in seedlings, roots, shoots, leaves, stems, inflorescences, pollen, flowers and siliques, with highest levels dividing tissues including inflorescence.

It localises to the cytoplasm. Its subcellular location is the nucleus. Its function is as follows. Putative transcription factor that acts as a key negative regulator of cell accumulation in shoot and floral meristems. Negatively regulates the size of the WUSCHEL (WUS)-expressing organizing center in inflorescence meristems. May act by down-regulating expression of WUS. Acts as an antirepressor that counteracts EMF1 action through modulation of trimethylated 'Lys-4' on histone H3 (H3K4me3) marks on target gene loci (including genes involved in salt stress response and flower development). Collaboratively with RBL and CYP40/SQN, influences floral meristem (FM) determinacy in an AGAMOUS and SUPERMAN-dependent manner, thus contributing to the floral developmental homeostasis. The chain is Protein ULTRAPETALA 1 from Arabidopsis thaliana (Mouse-ear cress).